Consider the following 118-residue polypeptide: Large ribosomal subunit protein bL20 (118 aa).

The protein belongs to the bacterial ribosomal protein bL20 family.

In terms of biological role, binds directly to 23S ribosomal RNA and is necessary for the in vitro assembly process of the 50S ribosomal subunit. It is not involved in the protein synthesizing functions of that subunit. This is Large ribosomal subunit protein bL20 from Francisella tularensis subsp. tularensis (strain WY96-3418).